The sequence spans 337 residues: Holliday junction branch migration complex subunit RuvB (337 aa).

Residues 1–179 (MTHQVSVLHQ…FSFTGRVAYY (179 aa)) form a large ATPase domain (RuvB-L) region. ATP contacts are provided by residues L18, R19, G60, K63, T64, S65, 126–128 (EDY), R169, Y179, and R216. Residue T64 participates in Mg(2+) binding. The interval 180 to 250 (SDEDLATILR…VAEKALAMLL (71 aa)) is small ATPAse domain (RuvB-S). Residues 253–337 (EWGLNEIDIK…DNLQSLGEEK (85 aa)) form a head domain (RuvB-H) region. The DNA site is built by K308 and R313.

This sequence belongs to the RuvB family. Homohexamer. Forms an RuvA(8)-RuvB(12)-Holliday junction (HJ) complex. HJ DNA is sandwiched between 2 RuvA tetramers; dsDNA enters through RuvA and exits via RuvB. An RuvB hexamer assembles on each DNA strand where it exits the tetramer. Each RuvB hexamer is contacted by two RuvA subunits (via domain III) on 2 adjacent RuvB subunits; this complex drives branch migration. In the full resolvosome a probable DNA-RuvA(4)-RuvB(12)-RuvC(2) complex forms which resolves the HJ.

It localises to the cytoplasm. The catalysed reaction is ATP + H2O = ADP + phosphate + H(+). Functionally, the RuvA-RuvB-RuvC complex processes Holliday junction (HJ) DNA during genetic recombination and DNA repair, while the RuvA-RuvB complex plays an important role in the rescue of blocked DNA replication forks via replication fork reversal (RFR). RuvA specifically binds to HJ cruciform DNA, conferring on it an open structure. The RuvB hexamer acts as an ATP-dependent pump, pulling dsDNA into and through the RuvAB complex. RuvB forms 2 homohexamers on either side of HJ DNA bound by 1 or 2 RuvA tetramers; 4 subunits per hexamer contact DNA at a time. Coordinated motions by a converter formed by DNA-disengaged RuvB subunits stimulates ATP hydrolysis and nucleotide exchange. Immobilization of the converter enables RuvB to convert the ATP-contained energy into a lever motion, pulling 2 nucleotides of DNA out of the RuvA tetramer per ATP hydrolyzed, thus driving DNA branch migration. The RuvB motors rotate together with the DNA substrate, which together with the progressing nucleotide cycle form the mechanistic basis for DNA recombination by continuous HJ branch migration. Branch migration allows RuvC to scan DNA until it finds its consensus sequence, where it cleaves and resolves cruciform DNA. The polypeptide is Holliday junction branch migration complex subunit RuvB (Chlamydia abortus (strain DSM 27085 / S26/3) (Chlamydophila abortus)).